The sequence spans 584 residues: Insulin-like growth factor 2 mRNA-binding protein 3 (584 aa).

2 consecutive RRM domains span residues 2–75 and 81–156; these read NKLY…HSVP and RKLQ…YIPD. Positions 160–199 are disordered; it reads AQQPPQQHPQGRRGFGQRGPPRQGSPSATTRQKPQSDVPL. Positions 184–194 are enriched in polar residues; it reads SPSATTRQKPQ. 4 consecutive KH domains span residues 196 to 261, 277 to 344, 409 to 474, and 491 to 557; these read DVPL…CKII, EIPL…EEEI, SETV…QGRI, and KLEA…QRKI.

The protein belongs to the RRM IMP/VICKZ family. As to quaternary structure, homodimer and multimer.

Its subcellular location is the cytoplasm. The protein resides in the nucleus. It is found in the P-body. The protein localises to the stress granule. Functionally, RNA-binding factor that may recruit target transcripts to cytoplasmic protein-RNA complexes (mRNPs). This transcript 'caging' into mRNPs allows mRNA transport and transient storage. It also modulates the rate and location at which target transcripts encounter the translational apparatus and shields them from endonuclease attacks or microRNA-mediated degradation. Preferentially binds to N6-methyladenosine (m6A)-containing mRNAs and increases their stability. The polypeptide is Insulin-like growth factor 2 mRNA-binding protein 3 (IGF2BP3) (Gallus gallus (Chicken)).